Reading from the N-terminus, the 347-residue chain is GMP reductase (347 aa).

Residue 108 to 131 (ADFEKTKQILDLNPALNFVCIDVA) participates in NADP(+) binding. Residues Gly-181 and Gly-183 each contribute to the K(+) site. The active-site Thioimidate intermediate is Cys-186. 216–239 (IVSDGGCTTPGDVAKAFGGGADFV) provides a ligand contact to NADP(+).

It belongs to the IMPDH/GMPR family. GuaC type 1 subfamily. Homotetramer.

It carries out the reaction IMP + NH4(+) + NADP(+) = GMP + NADPH + 2 H(+). In terms of biological role, catalyzes the irreversible NADPH-dependent deamination of GMP to IMP. It functions in the conversion of nucleobase, nucleoside and nucleotide derivatives of G to A nucleotides, and in maintaining the intracellular balance of A and G nucleotides. The polypeptide is GMP reductase (Shigella flexneri serotype 5b (strain 8401)).